The primary structure comprises 222 residues: uncharacterized protein (222 aa).

This is an uncharacterized protein from Acanthamoeba polyphaga mimivirus (APMV).